The chain runs to 301 residues: Phosducin-like protein (301 aa).

The residue at position 2 (Thr2) is an N-acetylthreonine. Residues 15-53 form a disordered region; sequence YYYSSSEEEDSDHEDKDRGRGALAGSSMPADADLAGEGI. Phosphoserine occurs at positions 20, 25, 226, 293, and 296. The Phosducin domain occupies 37–299; the sequence is LAGSSMPADA…TCHSEDSDLE (263 aa). The segment at 158–301 is thioredoxin fold; that stretch reads FKQVFEIPSG…HSEDSDLEID (144 aa).

It belongs to the phosducin family. As to quaternary structure, forms a complex with the beta and gamma subunits of the GTP-binding protein, transducin. Interacts with the CCT chaperonin complex.

Its subcellular location is the cell projection. It is found in the cilium. In terms of biological role, functions as a co-chaperone for CCT in the assembly of heterotrimeric G protein complexes, facilitates the assembly of both Gbeta-Ggamma and RGS-Gbeta5 heterodimers. Also acts as a positive regulator of hedgehog signaling and regulates ciliary function. The chain is Phosducin-like protein (PDCL) from Bos taurus (Bovine).